The sequence spans 194 residues: Probable GTP-binding protein EngB (194 aa).

In terms of domain architecture, EngB-type G spans 22-194 (LFLEVAFAGR…WQELDTMLNP (173 aa)). Residues 30-37 (GRSNVGKS), 57-61 (GCTQL), 75-78 (DLPG), 142-145 (TKAD), and 173-175 (FSS) each bind GTP. Mg(2+) contacts are provided by Ser37 and Thr59.

This sequence belongs to the TRAFAC class TrmE-Era-EngA-EngB-Septin-like GTPase superfamily. EngB GTPase family. Requires Mg(2+) as cofactor.

Necessary for normal cell division and for the maintenance of normal septation. In Desulforapulum autotrophicum (strain ATCC 43914 / DSM 3382 / VKM B-1955 / HRM2) (Desulfobacterium autotrophicum), this protein is Probable GTP-binding protein EngB.